The following is a 221-amino-acid chain: Thiopurine S-methyltransferase (221 aa).

4 residues coordinate S-adenosyl-L-methionine: W12, L47, E68, and R125.

Belongs to the class I-like SAM-binding methyltransferase superfamily. TPMT family.

It is found in the cytoplasm. It carries out the reaction S-adenosyl-L-methionine + a thiopurine = S-adenosyl-L-homocysteine + a thiopurine S-methylether.. This chain is Thiopurine S-methyltransferase, found in Legionella pneumophila subsp. pneumophila (strain Philadelphia 1 / ATCC 33152 / DSM 7513).